Consider the following 287-residue polypeptide: mRNA-capping enzyme regulatory subunit (287 aa).

The protein belongs to the chordopoxvirinae mRNA-capping enzyme regulatory subunit family. In terms of assembly, heterodimer of a catalytic and a regulatory subunit. Intrinsic methyltransferase activity of the catalytic subunit is weak and needs to be stimulated 30- to 50-fold by the regulatory subunit, which is itself catalytically inert.

It is found in the virion. In terms of biological role, regulatory subunit of the mRNA cap enzyme which stabilizes the catalytic subunit and enhances its methyltransferase activity through an allosteric mechanism. Heterodimeric mRNA capping enzyme catalyzes the linkage of a N7-methyl-guanosine moiety to the first transcribed nucleotide (cap 0 structure), whereas the polymerase associated VP39 is responsible for a second methylation at the 2'-O position of the ribose (cap 1 structure). Functionally, the heterodimeric enzyme is also involved in early viral gene transcription termination and intermediate viral gene transcription initiation. Early gene transcription termination requires the termination factor VTF, the DNA-dependent ATPase NPH-I and the Rap94 subunit of the viral RNA polymerase, as well as the presence of a specific termination motif. Binds, together with RAP94, to the termination motif 5'-UUUUUNU-3' in the nascent early mRNA. The sequence is that of mRNA-capping enzyme regulatory subunit from Vaccinia virus (strain Ankara) (VACV).